The sequence spans 47 residues: Large ribosomal subunit protein bL36B (47 aa).

It belongs to the bacterial ribosomal protein bL36 family.

This is Large ribosomal subunit protein bL36B from Pectobacterium atrosepticum (strain SCRI 1043 / ATCC BAA-672) (Erwinia carotovora subsp. atroseptica).